The primary structure comprises 448 residues: Tryptophan dimethylallyltransferase 1 (448 aa).

Residues 80-81 and Glu-89 each bind L-tryptophan; that span reads IL. Positions 100, 186, and 188 each coordinate substrate. 2 residues coordinate L-tryptophan: Tyr-190 and Arg-249. Arg-262, Lys-264, Tyr-266, Gln-348, Tyr-350, Tyr-414, and Tyr-418 together coordinate substrate.

This sequence belongs to the tryptophan dimethylallyltransferase family. Homodimer.

The enzyme catalyses L-tryptophan + dimethylallyl diphosphate = 4-(3-methylbut-2-enyl)-L-tryptophan + diphosphate. It functions in the pathway alkaloid biosynthesis; ergot alkaloid biosynthesis. Functionally, tryptophan dimethylallyltransferase; part of the gene cluster that mediates the biosynthesis of fungal ergot alkaloid. DmaW catalyzes the first step of ergot alkaloid biosynthesis by condensing dimethylallyl diphosphate (DMAP) and tryptophan to form 4-dimethylallyl-L-tryptophan. The second step is catalyzed by the methyltransferase easF that methylates 4-dimethylallyl-L-tryptophan in the presence of S-adenosyl-L-methionine, resulting in the formation of 4-dimethylallyl-L-abrine. The catalase easC and the FAD-dependent oxidoreductase easE then transform 4-dimethylallyl-L-abrine to chanoclavine-I which is further oxidized by easD in the presence of NAD(+), resulting in the formation of chanoclavine-I aldehyde. Agroclavine dehydrogenase easG then mediates the conversion of chanoclavine-I aldehyde to agroclavine via a non-enzymatic adduct reaction: the substrate is an iminium intermediate that is formed spontaneously from chanoclavine-I aldehyde in the presence of glutathione. The presence of easA is not required to complete this reaction. Further conversion of agroclavine to paspalic acid is a two-step process involving oxidation of agroclavine to elymoclavine and of elymoclavine to paspalic acid, the second step being performed by the elymoclavine oxidase cloA. Paspalic acid is then further converted to D-lysergic acid. Ergopeptines are assembled from D-lysergic acid and three different amino acids by the D-lysergyl-peptide-synthetases composed each of a monomudular and a trimodular nonribosomal peptide synthetase subunit. LpsB and lpsC encode the monomodular subunits responsible for D-lysergic acid activation and incorporation into the ergopeptine backbone. LpsA1 and A2 subunits encode the trimodular nonribosomal peptide synthetase assembling the tripeptide portion of ergopeptines. LpsA1 is responsible for formation of the major ergopeptine, ergotamine, and lpsA2 for alpha-ergocryptine, the minor ergopeptine of the total alkaloid mixture elaborated by C.purpurea. D-lysergyl-tripeptides are assembled by the nonribosomal peptide synthetases and released as N-(D-lysergyl-aminoacyl)-lactams. Cyclolization of the D-lysergyl-tripeptides is performed by the Fe(2+)/2-ketoglutarate-dependent dioxygenase easH which introduces a hydroxyl group into N-(D-lysergyl-aminoacyl)-lactam at alpha-C of the aminoacyl residue followed by spontaneous condensation with the terminal lactam carbonyl group. In Claviceps purpurea (Ergot fungus), this protein is Tryptophan dimethylallyltransferase 1.